The sequence spans 831 residues: Heat shock 70 kDa protein 14 (831 aa).

Disordered stretches follow at residues 503–579 (EEVE…KKKV) and 786–831 (TKPK…EGST). Over residues 509–526 (VTKEHSEETTKMDSDKAS) the composition is skewed to basic and acidic residues. At Ser533 the chain carries Phosphoserine.

Belongs to the heat shock protein 70 (TC 1.A.33) family. HSP110/SSE subfamily. Interacts with HTT1 in both cytoplasm and nucleus. In terms of tissue distribution, constitutively expressed.

It is found in the cytoplasm. The protein resides in the nucleus. In terms of biological role, in cooperation with other chaperones, Hsp70s are key components that facilitate folding of de novo synthesized proteins, assist translocation of precursor proteins into organelles, and are responsible for degradation of damaged protein under stress conditions. This Arabidopsis thaliana (Mouse-ear cress) protein is Heat shock 70 kDa protein 14 (HSP70-14).